The chain runs to 1152 residues: Integrin alpha-M (1152 aa).

The signal sequence occupies residues 1–16 (MALRVLLLTALTLCHG). Over 17-1104 (FNLDTENAMT…TKVEPFEVPN (1088 aa)) the chain is Extracellular. FG-GAP repeat units follow at residues 18–75 (NLDT…SCEP) and 76–135 (IRLQ…QQPQ). Cys-66 and Cys-73 form a disulfide bridge. Asn-86 carries an N-linked (GlcNAc...) asparagine glycan. A disulfide bridge links Cys-105 with Cys-123. A VWFA domain is found at 150–328 (DIAFLIDGSG…EALKTIQNQL (179 aa)). Asn-240 carries N-linked (GlcNAc...) asparagine glycosylation. FG-GAP repeat units lie at residues 339 to 390 (QTGS…STFI), 391 to 442 (NMTR…TGMW), 443 to 503 (ESNA…RARW), 506 to 564 (DAVL…SGIS), and 569 to 629 (QRIA…FNPR). N-linked (GlcNAc...) asparagine glycosylation is present at Asn-391. Ca(2+) is bound by residues Asp-465, Asp-467, Asn-469, Asp-473, Asp-529, Asn-531, Asp-533, Asp-537, Asp-592, Asp-596, and Asp-600. The N-linked (GlcNAc...) asparagine glycan is linked to Asn-469. A disulfide bridge connects residues Cys-654 and Cys-711. N-linked (GlcNAc...) asparagine glycosylation is found at Asn-692, Asn-696, and Asn-734. Cys-770 and Cys-776 are joined by a disulfide. Asn-801 carries N-linked (GlcNAc...) asparagine glycosylation. A disulfide bond links Cys-847 and Cys-864. N-linked (GlcNAc...) asparagine glycosylation is found at Asn-880, Asn-900, Asn-911, Asn-940, Asn-946, Asn-978, Asn-993, and Asn-1021. 2 disulfides stabilise this stretch: Cys-998–Cys-1022 and Cys-1027–Cys-1032. N-linked (GlcNAc...) asparagine glycans are attached at residues Asn-1044, Asn-1050, and Asn-1075. A helical membrane pass occupies residues 1105–1128 (PLPLIVGSSVGGLLLLALITAALY). At 1129–1152 (KLGFFKRQYKDMMSEGGPPGAEPQ) the chain is on the cytoplasmic side. The GFFKR motif signature appears at 1131–1135 (GFFKR).

It belongs to the integrin alpha chain family. As to quaternary structure, heterodimer of an alpha and a beta subunit. ITGAM associates with ITGB2. Found in a complex with CD177 and ITGB2/CD18. Interacts with JAM3. Interacts with THBD. Interacts with complement factor H/CFH; this interaction mediates adhesion of neutrophils to pathogens leading to pathogen clearance. Interacts with TMEM268; this interaction inhibits ITGAM degradation via the endosome-lysosome pathway. As to expression, predominantly expressed in monocytes and granulocytes. Expressed in neutrophils (at protein level).

Its subcellular location is the cell membrane. It is found in the membrane raft. In terms of biological role, integrin ITGAM/ITGB2 is implicated in various adhesive interactions of monocytes, macrophages and granulocytes as well as in mediating the uptake of complement-coated particles and pathogens. It is identical with CR-3, the receptor for the iC3b fragment of the third complement component. It probably recognizes the R-G-D peptide in C3b. Integrin ITGAM/ITGB2 is also a receptor for fibrinogen, factor X and ICAM1. It recognizes P1 and P2 peptides of fibrinogen gamma chain. Regulates neutrophil migration. In association with beta subunit ITGB2/CD18, required for CD177-PRTN3-mediated activation of TNF primed neutrophils. May regulate phagocytosis-induced apoptosis in extravasated neutrophils. May play a role in mast cell development. Required with TYROBP/DAP12 in microglia to control production of microglial superoxide ions which promote the neuronal apoptosis that occurs during brain development. In Homo sapiens (Human), this protein is Integrin alpha-M (ITGAM).